Consider the following 1359-residue polypeptide: ABC transporter C family member 1 (1359 aa).

Residues 111–394 form the ABC transmembrane type-1 1 domain; it reads NKLTIFLQIL…LPNSIQQLQS (284 aa). 6 helical membrane passes run 119 to 139, 147 to 167, 214 to 234, 244 to 264, 332 to 352, and 363 to 383; these read ILTN…IQFI, SFLA…SYTF, LLSV…MGIF, LALL…IMVI, MIFW…VLVL, and ITLE…IPLL. A disordered region spans residues 409–478; that stretch reads PEIQQNHSSN…QQQQQQQQQQ (70 aa). The span at 420-433 shows a compositional bias: acidic residues; it reads EEEEEDEYDDDINS. A compositionally biased stretch (polar residues) spans 440 to 450; it reads HNGSFNWNQVD. A compositionally biased stretch (low complexity) spans 459 to 478; the sequence is GNQQQQQQQQQQQQQQQQQQ. The ABC transporter 1 domain maps to 470 to 690; that stretch reads QQQQQQQQQQ…IDFESIMKTK (221 aa). 502–509 provides a ligand contact to ATP; it reads GVVGSGKT. In terms of domain architecture, ABC transmembrane type-1 2 spans 763–1061; that stretch reads LRVYKEYFKH…LEVKMNSVER (299 aa). 5 helical membrane passes run 773–793, 819–839, 884–904, 906–926, and 999–1021; these read GSSI…QIIY, IYLL…FMMA, VDLL…TVLV, IGIM…LIGI, and WVAV…FSLF. A coiled-coil region spans residues 1073-1102; the sequence is NSKINFFRNEQQEEEEEEEEEFDFDNDDYD. One can recognise an ABC transporter 2 domain in the interval 1116-1350; that stretch reads IEFRNVEIKY…QESRFSKLVK (235 aa). 1150–1157 lines the ATP pocket; that stretch reads GRTGAGKS.

Belongs to the ABC transporter superfamily. ABCC family. Conjugate transporter (TC 3.A.1.208) subfamily.

It is found in the membrane. This is ABC transporter C family member 1 (abcC1) from Dictyostelium discoideum (Social amoeba).